Here is a 636-residue protein sequence, read N- to C-terminus: Epsin-3 (636 aa).

Residues R8, K11, R25, N30, R63, and H73 each coordinate a 1,2-diacyl-sn-glycero-3-phospho-(1D-myo-inositol-4,5-bisphosphate). The 133-residue stretch at 12-144 folds into the ENTH domain; that stretch reads NIVHNYSEAE…KDEERLRQER (133 aa). A disordered region spans residues 153–503; it reads RMALEGMGIG…TPESFLGPSA (351 aa). Residues 174–189 are compositionally biased toward low complexity; the sequence is GSPSSYTSASSSPRYA. Phosphoserine is present on residues S184 and S185. UIM domains follow at residues 202-221 and 229-248; these read EEEL…AERP and DEDL…HEKG. Basic and acidic residues-rich tracts occupy residues 214–231 and 242–256; these read SREE…RDED and RQEH…KGDD. S257 carries the phosphoserine modification. A compositionally biased stretch (basic and acidic residues) spans 270–288; it reads RQRDREPEREERKEEEKLK. 5 repeat units span residues 315–317, 338–340, 365–367, 381–383, and 398–400. The interval 315–400 is 5 X 3 AA repeats of [DE]-P-W; that stretch reads DPWDIPGLRP…KLPSTGADPW (86 aa). Residues 426-435 show a composition bias toward basic and acidic residues; it reads ESTEPKESRD. 2 consecutive repeat copies span residues 523-525 and 536-538. The segment at 523–635 is 3 X 3 AA repeats of N-P-F; that stretch reads NPFLTGLGVP…LPPQAGTNPF (113 aa). Positions 607 to 616 are enriched in pro residues; the sequence is PPPASLPQPL. The segment at 607-636 is disordered; it reads PPPASLPQPLLPTSGPMGPLPPQAGTNPFL. Repeat 3 spans residues 633–635; it reads NPF.

Belongs to the epsin family.

The protein localises to the cytoplasm. It localises to the cell cortex. Its subcellular location is the perinuclear region. It is found in the cytoplasmic vesicle. The protein resides in the clathrin-coated vesicle. This chain is Epsin-3 (Epn3), found in Mus musculus (Mouse).